The primary structure comprises 693 residues: Phenoloxidase subunit 2 (693 aa).

Positions M1–R51 are excised as a propeptide. 2 N-linked (GlcNAc...) asparagine glycosylation sites follow: N26 and N64. Residues H213, H217, and H243 each coordinate Cu cation. E351 serves as the catalytic Proton acceptor. Cu cation is bound by residues H366, H370, and H406. N-linked (GlcNAc...) asparagine glycans are attached at residues N462 and N494. 2 cysteine pairs are disulfide-bonded: C583–C627 and C585–C634. An N-linked (GlcNAc...) asparagine glycan is attached at N680.

Heterodimer. It depends on Cu(2+) as a cofactor. Post-translationally, the N-terminus is blocked. As to expression, synthesized by hemocytes and released into the hemolymph plasma.

It localises to the secreted. The enzyme catalyses 2 L-dopa + O2 = 2 L-dopaquinone + 2 H2O. It carries out the reaction L-tyrosine + O2 = L-dopaquinone + H2O. Functionally, this is a copper-containing oxidase that functions in the formation of pigments such as melanins and other polyphenolic compounds. Catalyzes the rate-limiting conversions of tyrosine to DOPA, DOPA to DOPA-quinone and possibly 5,6 dihydroxyindole to indole-5'6 quinone. The protein is Phenoloxidase subunit 2 of Bombyx mori (Silk moth).